Consider the following 20-residue polypeptide: Truncated non-structural protein of 4.9 kDa (20 aa).

The protein belongs to the coronaviruses ns4.9 protein family.

In Sus scrofa (Pig), this protein is Truncated non-structural protein of 4.9 kDa.